The chain runs to 467 residues: Calcium-binding protein P (467 aa).

Pro residues-rich tracts occupy residues 1–10 (MQNPQNPPPA) and 45–62 (QYPPQQPGAPGSNLPPYP). The segment at 1–311 (MQNPQNPPPA…GAYPGQPPMG (311 aa)) is disordered. The XYPPX signature appears at 45–49 (QYPPQ). Residues 63-74 (GTQQPGAPGAPG) are compositionally biased toward low complexity. 17 consecutive short sequence motifs (XYPPX) follow at residues 75-79 (QYPPQ), 83-87 (QYPPQ), 94-98 (QYPPQ), 104-108 (GYPPQ), 115-119 (QYPPQ), 125-129 (GYPPQ), 136-140 (QYPPQ), 146-150 (QYPPQ), 157-161 (QYPPQ), 165-169 (QYPPQ), 176-180 (AYPPQ), 187-191 (AYPPQ), 221-225 (GVPPQ), 238-242 (AYPPQ), 247-251 (AYPPQ), 256-260 (AYPPQ), and 275-279 (AYPPQ). Composition is skewed to pro residues over residues 75–109 (QYPPQQPGQYPPQQPGAPGQYPPQQPGQPGYPPQQ) and 118–131 (PQQPGQPGYPPQQP). Low complexity predominate over residues 132–145 (GAPGQYPPQQGQPG). Low complexity-rich tracts occupy residues 153–193 (GQPG…PQQG) and 215–246 (AYPGQPGVPPQQGAYPGQQPPMGAYPPQGQPG). The span at 253 to 311 (QPGAYPPQQQQVAYPGQQPPMGAYPPQQGAYPGQQGAYPGQQGAYPGQQGAYPGQPPMG) shows a compositional bias: low complexity. 2 EF-hand domains span residues 399-434 (QKMMAASAAFRIHDSNCSGTLSKKEFKKLIKHLGYY) and 435-467 (FSKGQTKMLFHSIDRDYSGSLSEREFVDWWSMQ). The Ca(2+) site is built by Asp-412, Asn-414, Ser-416, Thr-418, and Glu-423.

This is Calcium-binding protein P (cbpP) from Dictyostelium discoideum (Social amoeba).